Reading from the N-terminus, the 46-residue chain is Mu-segestritoxin-Sf1f (46 aa).

4 disulfides stabilise this stretch: Cys3-Cys19, Cys10-Cys22, Cys18-Cys42, and Cys24-Cys40. Residues 31 to 33 are keys region for toxin activity; that stretch reads RPW.

The protein belongs to the neurotoxin 16 (SFI) family. As to expression, expressed by the venom gland.

Its subcellular location is the secreted. Insecticidal toxin. It inhibits insect voltage-gated sodium channels (Nav) by partially blocking the channel pore in DUM neurons from the American cockroach, not by acting as a gating modifier. The inhibition is only partially reversible after prolonged washout. In vivo, the toxin causes flaccid paralysis followed by death when injected into Heliothis virescens larvae. It also causes uncoordinated movements followed by full paralysis to sheep blowflies (Lucilia cuprina). When the toxin is fused to snowdrop lectin, it is orally active against larvae of the tomato moth (Laconobia oleracea), the rice brown planthopper (Nilaparvata lugens), and the peach-potato aphid (Myzus persicae). The polypeptide is Mu-segestritoxin-Sf1f (Segestria florentina (Tube-web spider)).